The primary structure comprises 385 residues: Queuine tRNA-ribosyltransferase (385 aa).

The Proton acceptor role is filled by Asp-92. Residues 92–96, Asp-146, Gln-188, and Gly-215 contribute to the substrate site; that span reads DSGGF. An RNA binding region spans residues 246-252; sequence GVGHPED. Catalysis depends on Asp-265, which acts as the Nucleophile. Positions 270–274 are RNA binding; important for wobble base 34 recognition; sequence TRTGR. Positions 303, 305, 308, and 334 each coordinate Zn(2+).

Belongs to the queuine tRNA-ribosyltransferase family. In terms of assembly, homodimer. Within each dimer, one monomer is responsible for RNA recognition and catalysis, while the other monomer binds to the replacement base PreQ1. Zn(2+) is required as a cofactor.

It carries out the reaction 7-aminomethyl-7-carbaguanine + guanosine(34) in tRNA = 7-aminomethyl-7-carbaguanosine(34) in tRNA + guanine. Its pathway is tRNA modification; tRNA-queuosine biosynthesis. Catalyzes the base-exchange of a guanine (G) residue with the queuine precursor 7-aminomethyl-7-deazaguanine (PreQ1) at position 34 (anticodon wobble position) in tRNAs with GU(N) anticodons (tRNA-Asp, -Asn, -His and -Tyr). Catalysis occurs through a double-displacement mechanism. The nucleophile active site attacks the C1' of nucleotide 34 to detach the guanine base from the RNA, forming a covalent enzyme-RNA intermediate. The proton acceptor active site deprotonates the incoming PreQ1, allowing a nucleophilic attack on the C1' of the ribose to form the product. After dissociation, two additional enzymatic reactions on the tRNA convert PreQ1 to queuine (Q), resulting in the hypermodified nucleoside queuosine (7-(((4,5-cis-dihydroxy-2-cyclopenten-1-yl)amino)methyl)-7-deazaguanosine). This is Queuine tRNA-ribosyltransferase from Thermus thermophilus (strain ATCC 27634 / DSM 579 / HB8).